Reading from the N-terminus, the 515-residue chain is Arabinose import ATP-binding protein AraG 2 (515 aa).

The segment at 1–22 (MTMQTMTAASGHDAEAGTPPDG) is disordered. ABC transporter domains lie at 25-260 (LALD…MVGR) and 260-511 (RSIE…LIKL). 57–64 (GENGAGKS) is a binding site for ATP.

Belongs to the ABC transporter superfamily. Arabinose importer (TC 3.A.1.2.2) family. As to quaternary structure, the complex is composed of two ATP-binding proteins (AraG), two transmembrane proteins (AraH) and a solute-binding protein (AraF).

It localises to the cell inner membrane. The enzyme catalyses L-arabinose(out) + ATP + H2O = L-arabinose(in) + ADP + phosphate + H(+). Functionally, part of the ABC transporter complex AraFGH involved in arabinose import. Responsible for energy coupling to the transport system. This chain is Arabinose import ATP-binding protein AraG 2, found in Burkholderia cenocepacia (strain HI2424).